The primary structure comprises 378 residues: Aminotransferase apf4 (378 aa).

Pyridoxal 5'-phosphate is bound at residue Arg-88. At Lys-189 the chain carries N6-(pyridoxal phosphate)lysine. Residue Glu-228 participates in pyridoxal 5'-phosphate binding. Residues 359-378 form a disordered region; that stretch reads ERGHNGQPTADPTRVIEMPE.

It belongs to the class-IV pyridoxal-phosphate-dependent aminotransferase family. It depends on pyridoxal 5'-phosphate as a cofactor.

It participates in secondary metabolite biosynthesis. In terms of biological role, aminotransferase; part of the gene cluster that mediates the biosynthesis of the cyclic tetrapeptide apicidin F (APF). The non-ribosomal peptide synthetase apf1 incorporates four different amino acids to produce apicidin F: L-phenylalanine, D-pipecolic acid (D-pip), N-methoxy-L-tryptophan and L-2-aminooctanedioic acid. L-Phenylalanine is the only proteinogenic amino acid directly used by apf1. The 3 other apf1 substrates are non-proteinogenic and have to be modified by other enzymes of the cluster. Lysine is converted to delta-1-pyrroline-5-carboxylate (P5C) which is reduced to L-pipecolic acid (L-pip) by apf3. L-pip is epimerized to D-pip, probably by apf1 activity, prior to incorporation. L-Tryptophan is N-oxidyzed by one of the cytochrome P450 monooxygenases (apf7 or apf8), and further methylated at the hydroxy group by the O-methyltransferase apf6 to yield N-methoxy-L-tryptophan. The synthesis of the fourth apf1 substrate is more complex. The fatty acid synthase apf5 is involved in the synthesis of the octanoic acid backbone of L-2-aminooctanedioic acid by fixing one acetyl-CoA unit and three malonyl-CoA units. Then one of the cytochrome P450 monooxygenases (apf7 or apf8) may oxidize this backbone to 2-oxooctanoic acid. The aminotransferase apf4 is predicted to catalyze the exchange of the keto group with an amino group. The next step would be the oxidation of 2-aminooctanoic acid by one of the cytochrome P450 monooxygenases (apf7 or apf8). The last step is the oxidation of 2-amino-8-hydroxyoctanoic acid to 2-aminooctanedioic acid is catalyzed by the FAD-dependent monooxygenase apf9. The protein is Aminotransferase apf4 of Gibberella fujikuroi (strain CBS 195.34 / IMI 58289 / NRRL A-6831) (Bakanae and foot rot disease fungus).